The following is a 407-amino-acid chain: Chorismate synthase (407 aa).

Residues Arg43 and Arg49 each coordinate NADP(+). FMN-binding positions include 143–145 (RSS), 264–265 (QA), Gly308, 323–327 (KPIST), and Arg349.

This sequence belongs to the chorismate synthase family. In terms of assembly, homotetramer. It depends on FMNH2 as a cofactor.

The catalysed reaction is 5-O-(1-carboxyvinyl)-3-phosphoshikimate = chorismate + phosphate. It functions in the pathway metabolic intermediate biosynthesis; chorismate biosynthesis; chorismate from D-erythrose 4-phosphate and phosphoenolpyruvate: step 7/7. Its function is as follows. Catalyzes the anti-1,4-elimination of the C-3 phosphate and the C-6 proR hydrogen from 5-enolpyruvylshikimate-3-phosphate (EPSP) to yield chorismate, which is the branch point compound that serves as the starting substrate for the three terminal pathways of aromatic amino acid biosynthesis. This reaction introduces a second double bond into the aromatic ring system. The polypeptide is Chorismate synthase (Corynebacterium efficiens (strain DSM 44549 / YS-314 / AJ 12310 / JCM 11189 / NBRC 100395)).